The following is a 356-amino-acid chain: GTPase Obg (356 aa).

The Obg domain occupies 1–159; that stretch reads MKFLDQAKVY…RWIWLRLKLI (159 aa). In terms of domain architecture, OBG-type G spans 160-328; the sequence is ADAGLVGLPN…ALYAIAQHLG (169 aa). Residues 166 to 173, 191 to 195, 213 to 216, 280 to 283, and 309 to 311 each bind GTP; these read GLPNAGKS, FTTLH, DIPG, NKID, and SGV. Mg(2+) contacts are provided by S173 and T193. Residues 333 to 356 are disordered; it reads DIPLPKPSNADEEDPDTDQPWSPV.

Belongs to the TRAFAC class OBG-HflX-like GTPase superfamily. OBG GTPase family. In terms of assembly, monomer. Mg(2+) is required as a cofactor.

It localises to the cytoplasm. Its function is as follows. An essential GTPase which binds GTP, GDP and possibly (p)ppGpp with moderate affinity, with high nucleotide exchange rates and a fairly low GTP hydrolysis rate. Plays a role in control of the cell cycle, stress response, ribosome biogenesis and in those bacteria that undergo differentiation, in morphogenesis control. The polypeptide is GTPase Obg (Hyphomonas neptunium (strain ATCC 15444)).